The following is a 218-amino-acid chain: Phosphoglycolate phosphatase (218 aa).

The active-site Nucleophile is the Asp7. 3 residues coordinate Mg(2+): Asp7, Asp9, and Asp167.

This sequence belongs to the HAD-like hydrolase superfamily. CbbY/CbbZ/Gph/YieH family. The cofactor is Mg(2+).

It catalyses the reaction 2-phosphoglycolate + H2O = glycolate + phosphate. It participates in organic acid metabolism; glycolate biosynthesis; glycolate from 2-phosphoglycolate: step 1/1. Its function is as follows. Specifically catalyzes the dephosphorylation of 2-phosphoglycolate. Is involved in the dissimilation of the intracellular 2-phosphoglycolate formed during the DNA repair of 3'-phosphoglycolate ends, a major class of DNA lesions induced by oxidative stress. This is Phosphoglycolate phosphatase from Cereibacter sphaeroides (strain ATCC 17029 / ATH 2.4.9) (Rhodobacter sphaeroides).